The primary structure comprises 303 residues: Serine/threonine-protein phosphatase 6 catalytic subunit (303 aa).

Positions 51, 53, 79, and 111 each coordinate Mn(2+). Catalysis depends on histidine 112, which acts as the Proton donor. Residues histidine 161 and histidine 235 each coordinate Mn(2+).

It belongs to the PPP phosphatase family. PP-6 (PP-V) subfamily. Requires Mn(2+) as cofactor.

The protein resides in the cytoplasm. It catalyses the reaction O-phospho-L-seryl-[protein] + H2O = L-seryl-[protein] + phosphate. The enzyme catalyses O-phospho-L-threonyl-[protein] + H2O = L-threonyl-[protein] + phosphate. May be involved in controlling cellularization or in regulating transcription of the genes involved in this process. The protein is Serine/threonine-protein phosphatase 6 catalytic subunit (PpV) of Drosophila melanogaster (Fruit fly).